Reading from the N-terminus, the 154-residue chain is Large ribosomal subunit protein uL13 (154 aa).

Residues 132 to 154 (PHEAQQPEVLDVKSMNAKNTRSA) form a disordered region.

It belongs to the universal ribosomal protein uL13 family. As to quaternary structure, part of the 50S ribosomal subunit.

In terms of biological role, this protein is one of the early assembly proteins of the 50S ribosomal subunit, although it is not seen to bind rRNA by itself. It is important during the early stages of 50S assembly. In Paracoccus denitrificans (strain Pd 1222), this protein is Large ribosomal subunit protein uL13.